The following is a 443-amino-acid chain: MAKTEMYQPPLGNRALFKMSIPGSKSLTNRHLIIAAIASGETTIHNLLESRDTNLMIEGLRRIGCKIEKLNHTGTHDTGVISPHCTCLNDLIQPSDVRIIPSKHYTCSTKIDCGLAGTVMRFLPVLAGLCKGSVEFFGDDQAIRRPMDGTLHALRKLGVQVDGDRIPFTVHGRGEIEGGALETTEHSSSQFISGLLLSACRFKNGLTLKHIGNPLPSRPYIDMTVEVMREWGINVTHSDGVWAVTPKELTGKHITIEPDLSNAAPFMIGAIVTGGSATIQNWPSKTSQPGKYLEAILPQFGAEITKTANTITVSGTGNITGIRADLGHIGELVPNLVALATLAETPSVFYNIGHIRYHETDRIEALVNEISSLGGTITAGKDYIKITPTTLTRSGVWKTYKDHRMATSGAIIGLRHKLTIEDIECTSKTFPRFADLWSGAFGK.

3-phosphoshikimate-binding residues include lysine 25, serine 26, and arginine 30. A phosphoenolpyruvate-binding site is contributed by lysine 25. 2 residues coordinate phosphoenolpyruvate: glycine 117 and arginine 145. Positions 188, 189, 190, 217, 331, and 358 each coordinate 3-phosphoshikimate. Phosphoenolpyruvate is bound at residue glutamine 190. The active-site Proton acceptor is the glutamate 331. Arginine 362, arginine 404, and lysine 428 together coordinate phosphoenolpyruvate.

This sequence belongs to the EPSP synthase family. Monomer.

The protein localises to the cytoplasm. The enzyme catalyses 3-phosphoshikimate + phosphoenolpyruvate = 5-O-(1-carboxyvinyl)-3-phosphoshikimate + phosphate. It functions in the pathway metabolic intermediate biosynthesis; chorismate biosynthesis; chorismate from D-erythrose 4-phosphate and phosphoenolpyruvate: step 6/7. Catalyzes the transfer of the enolpyruvyl moiety of phosphoenolpyruvate (PEP) to the 5-hydroxyl of shikimate-3-phosphate (S3P) to produce enolpyruvyl shikimate-3-phosphate and inorganic phosphate. The polypeptide is 3-phosphoshikimate 1-carboxyvinyltransferase (Tropheryma whipplei (strain TW08/27) (Whipple's bacillus)).